The sequence spans 1543 residues: Tubby-related protein 4 (1543 aa).

WD repeat units follow at residues 6-72, 73-115, 116-158, 159-237, 238-276, 277-334, and 335-372; these read EHGP…STPQ, RINF…YEGR, WSVE…SGQR, HWSS…SDDY, APPQDGPAAYPIPVQNIKPLLTVSFTSGDISLMNNYDDL, SPTV…GEHI, and FTLDTLVQRPIISICWGHRDSRLLMASGPALYVVRVEH. Positions 364-414 constitute an SOCS box domain; sequence ALYVVRVEHRVSSLQLLCQQAIASTLREDKDVSKLTLPPRLCSYLSTAFIP. Disordered regions lie at residues 530 to 577 and 829 to 850; these read SPKI…SVGS and TKINPPPPYPGTIPAAPTTAAP. The residue at position 577 (S577) is a Phosphoserine. R945 and R950 each carry asymmetric dimethylarginine. Disordered regions lie at residues 1004 to 1058, 1326 to 1355, and 1367 to 1453; these read SPRA…HTAS, VPQRTEKFGKKNRKRLDSRAEEGSVQAITE, and DFNS…ASEK. The segment covering 1036-1050 has biased composition (polar residues); that stretch reads TCSQCSGTGPSSQPG. Residues 1329-1347 show a composition bias toward basic and acidic residues; sequence RTEKFGKKNRKRLDSRAEE. Phosphoserine occurs at positions 1343 and 1374. The span at 1443–1453 shows a compositional bias: basic and acidic residues; sequence EEAKCRRASEK. The segment at 1466 to 1543 is TUB; that stretch reads VMANKQPLWN…ALANVTQRLK (78 aa).

Belongs to the TUB family. Expressed mainly in the brain, skeletal muscle, testis and kidney.

The protein localises to the cytoplasm. Its pathway is protein modification; protein ubiquitination. Functionally, may be a substrate-recognition component of a SCF-like ECS (Elongin-Cullin-SOCS-box protein) E3 ubiquitin ligase complex which mediates the ubiquitination and subsequent proteasomal degradation of target proteins. The chain is Tubby-related protein 4 (TULP4) from Homo sapiens (Human).